Here is a 367-residue protein sequence, read N- to C-terminus: Alginate lyase (367 aa).

The signal sequence occupies residues 1-27 (MKTSHLIRIALPGALAAALLASQVSQA). Substrate-binding positions include 65 to 66 (SK), 138 to 139 (HT), and Tyr256.

It belongs to the polysaccharide lyase 5 family.

Its subcellular location is the periplasm. The enzyme catalyses Eliminative cleavage of alginate to give oligosaccharides with 4-deoxy-alpha-L-erythro-hex-4-enuronosyl groups at their non-reducing ends and beta-D-mannuronate at their reducing end.. Functionally, catalyzes the depolymerization of alginate by cleaving the beta-1,4 glycosidic bond between two adjacent sugar residues via a beta-elimination mechanism. May serve to degrade mislocalized alginate that is trapped in the periplasmic space. Acts preferentially on non-acetylated alginate or its precursor mannuronan. Is able to catalyze cleavage adjacent to either mannuronate or guluronate residues in alginate. Exhaustive digestion of alginate by AlgL generates dimeric and trimeric products. In addition to its enzymatic function, AlgL appears to be required for alginate export, maybe as part of a multi-protein alginate-secretion complex. In Pseudomonas aeruginosa (strain ATCC 15692 / DSM 22644 / CIP 104116 / JCM 14847 / LMG 12228 / 1C / PRS 101 / PAO1), this protein is Alginate lyase.